Consider the following 404-residue polypeptide: MKLPIYLDYSATCPVDPRVAEKMVQYMTMDGTFGNPASRSHRYGWQAEEAVDTAREQIAALLNADPREIVFTSGATESDNLAIKGVAHFYNKQGKHIITSKTEHKAVLDTMRQLEREGFEVTYLDPESNGLIDLAKLEAAMRDDTILVSIMHVNNEIGVVQDIAAIGELCRSRKVVFHVDAAQSAGKVAIDVQEMKVDLISLSAHKAYGPKGIGALYVRRKPRIRLEAQMHGGGHERGFRSGTLPTHQIVGMGEAFRIAKEELQQDYDHALKLRNRLLDGIKDMEAVTINGDLDQRVPHNLNVSFAFVEGESLLMALKDLAVSSGSACTSASLEPSYVLRALGLNDELAHSSIRFSFGRFTTEAEIDYAIELIRVAVDKLRAMSPLWDMYKDGVDLNTVEWAHH.

Residues 75–76 (AT), Asn-155, Gln-183, and 203–205 (SAH) each bind pyridoxal 5'-phosphate. Residue Lys-206 is modified to N6-(pyridoxal phosphate)lysine. Residue Thr-243 coordinates pyridoxal 5'-phosphate. The Cysteine persulfide intermediate role is filled by Cys-328. A [2Fe-2S] cluster-binding site is contributed by Cys-328.

This sequence belongs to the class-V pyridoxal-phosphate-dependent aminotransferase family. NifS/IscS subfamily. In terms of assembly, homodimer. Forms a heterotetramer with IscU, interacts with other sulfur acceptors. It depends on pyridoxal 5'-phosphate as a cofactor.

The protein localises to the cytoplasm. It catalyses the reaction (sulfur carrier)-H + L-cysteine = (sulfur carrier)-SH + L-alanine. The protein operates within cofactor biosynthesis; iron-sulfur cluster biosynthesis. In terms of biological role, master enzyme that delivers sulfur to a number of partners involved in Fe-S cluster assembly, tRNA modification or cofactor biosynthesis. Catalyzes the removal of elemental sulfur atoms from cysteine to produce alanine. Functions as a sulfur delivery protein for Fe-S cluster synthesis onto IscU, an Fe-S scaffold assembly protein, as well as other S acceptor proteins. The protein is Cysteine desulfurase IscS of Vibrio cholerae serotype O1 (strain M66-2).